The chain runs to 366 residues: Methyltransferase calH (366 aa).

S-adenosyl-L-methionine-binding positions include threonine 189, aspartate 216, and asparagine 245–alanine 246.

This sequence belongs to the class I-like SAM-binding methyltransferase superfamily.

It functions in the pathway secondary metabolite biosynthesis. In terms of biological role, methyltransferase; part of the gene cluster that mediates the biosynthesis of calbistrin A and related compounds. Calbistrin A is a secondary metabolite with an interesting structure that was recently found to have bioactivity against leukemia cells. It consists of two polyketides linked by an ester bond: a bicyclic decalin containing polyketide and a linear 12 carbon dioic acid structure. The polyketide synthase calA is probably responsible for forming the decalin moiety. Because calA lacks a designated enoylreductase (ER) domain, the required activity is provided by the trans-enoyl reductase calK. Following release from the PKS, calF then probably catalyzes the oxidation and the subsequent Diels Alder cycloisomerization that lead to the formation of the decalin moiety. The decalin polyketide backbone includes two C-methyl groups, at C7 and C11 in backbone, of which the C7 position is probably methylated by the methyltransferase domain of calA. A candidate for adding the methyl group at C11, if not done by CalA, is the cluster methyltransferase calH. Several additional tailoring enzymes within the cluster could be involved in the modification of the decalin polyketide product. Those include the 3 cytochrome P450 monooxygenases CalE, CalG and CalL, of which one might be responsible for the introduction of the extra hydroxyl group attached to the backbone of the decalin moiety, at position C9 in the backbone, that allows for attachment of the linear moiety. One tailoring enzyme activity that is expected to be involved in biosynthesis of calbistrin is an acyltransferase for connecting the two polyketide synthase products, and which could be performed by the cluster acyltransferase calJ. The enzyme responsible for the biosynthesis of the linear moiety, probably a second PKS, has not been identified yet. This Penicillium decumbens protein is Methyltransferase calH.